Reading from the N-terminus, the 23-residue chain is Cytochrome c3-1 (23 aa).

Positions 1 to 23 (AAPKAPADGLKMDKTKQXVVFNH) are disordered. H23 is a binding site for heme.

Binds 4 heme groups per subunit.

It localises to the periplasm. In terms of biological role, participates in sulfate respiration coupled with phosphorylation by transferring electrons from the enzyme dehydrogenase to ferredoxin. This is Cytochrome c3-1 from Nitratidesulfovibrio vulgaris (Desulfovibrio vulgaris).